A 595-amino-acid chain; its full sequence is Arginine--tRNA ligase (595 aa).

The 'HIGH' region signature appears at 132–142; that stretch reads ANPTGPLHVGH.

This sequence belongs to the class-I aminoacyl-tRNA synthetase family. In terms of assembly, monomer.

It localises to the cytoplasm. The catalysed reaction is tRNA(Arg) + L-arginine + ATP = L-arginyl-tRNA(Arg) + AMP + diphosphate. The polypeptide is Arginine--tRNA ligase (Cupriavidus necator (strain ATCC 17699 / DSM 428 / KCTC 22496 / NCIMB 10442 / H16 / Stanier 337) (Ralstonia eutropha)).